A 266-amino-acid chain; its full sequence is Phosphatidylglycerol--prolipoprotein diacylglyceryl transferase (266 aa).

Transmembrane regions (helical) follow at residues 19–39 (IWGP…FAFA), 61–81 (LMFW…TLFY), 91–111 (LYLF…LGVI), 125–145 (FLQV…FGRI), 176–196 (PSQL…ILWF), 204–224 (GAVS…VEFF), and 237–257 (GMSM…ILMV). Arg-144 contributes to the a 1,2-diacyl-sn-glycero-3-phospho-(1'-sn-glycerol) binding site.

The protein belongs to the Lgt family.

Its subcellular location is the cell inner membrane. It catalyses the reaction L-cysteinyl-[prolipoprotein] + a 1,2-diacyl-sn-glycero-3-phospho-(1'-sn-glycerol) = an S-1,2-diacyl-sn-glyceryl-L-cysteinyl-[prolipoprotein] + sn-glycerol 1-phosphate + H(+). Its pathway is protein modification; lipoprotein biosynthesis (diacylglyceryl transfer). Catalyzes the transfer of the diacylglyceryl group from phosphatidylglycerol to the sulfhydryl group of the N-terminal cysteine of a prolipoprotein, the first step in the formation of mature lipoproteins. In Idiomarina loihiensis (strain ATCC BAA-735 / DSM 15497 / L2-TR), this protein is Phosphatidylglycerol--prolipoprotein diacylglyceryl transferase.